Consider the following 201-residue polypeptide: Probable nicotinate-nucleotide adenylyltransferase (201 aa).

Belongs to the NadD family.

The catalysed reaction is nicotinate beta-D-ribonucleotide + ATP + H(+) = deamido-NAD(+) + diphosphate. It functions in the pathway cofactor biosynthesis; NAD(+) biosynthesis; deamido-NAD(+) from nicotinate D-ribonucleotide: step 1/1. Catalyzes the reversible adenylation of nicotinate mononucleotide (NaMN) to nicotinic acid adenine dinucleotide (NaAD). The sequence is that of Probable nicotinate-nucleotide adenylyltransferase from Bacteroides fragilis (strain YCH46).